The following is a 125-amino-acid chain: Ribosome-binding factor A (125 aa).

Belongs to the RbfA family. In terms of assembly, monomer. Binds 30S ribosomal subunits, but not 50S ribosomal subunits or 70S ribosomes.

It localises to the cytoplasm. Its function is as follows. One of several proteins that assist in the late maturation steps of the functional core of the 30S ribosomal subunit. Associates with free 30S ribosomal subunits (but not with 30S subunits that are part of 70S ribosomes or polysomes). Required for efficient processing of 16S rRNA. May interact with the 5'-terminal helix region of 16S rRNA. In Carboxydothermus hydrogenoformans (strain ATCC BAA-161 / DSM 6008 / Z-2901), this protein is Ribosome-binding factor A.